The following is a 159-amino-acid chain: Putative esterase DR_2406 (159 aa).

It belongs to the thioesterase PaaI family.

The chain is Putative esterase DR_2406 from Deinococcus radiodurans (strain ATCC 13939 / DSM 20539 / JCM 16871 / CCUG 27074 / LMG 4051 / NBRC 15346 / NCIMB 9279 / VKM B-1422 / R1).